Consider the following 1026-residue polypeptide: mRNA transport homolog 4 (1026 aa).

Positions Ile-134 to Val-290 constitute a Helicase ATP-binding domain. Ala-147–Thr-154 serves as a coordination point for ATP. The DEIH box motif lies at Asp-238–His-241. A Helicase C-terminal domain is found at Asn-360–Glu-564.

This sequence belongs to the helicase family. SKI2 subfamily.

The protein resides in the nucleus. This Caenorhabditis elegans protein is mRNA transport homolog 4 (mtr-4).